Here is a 588-residue protein sequence, read N- to C-terminus: 3-methylmercaptopropionyl-CoA dehydrogenase (588 aa).

Glutamate 435 (proton acceptor) is an active-site residue.

The protein belongs to the acyl-CoA dehydrogenase family. Requires FAD as cofactor.

It carries out the reaction 3-(methylsulfanyl)propanoyl-CoA + oxidized [electron-transfer flavoprotein] + H(+) = 3-(methylsulfanyl)acryloyl-CoA + reduced [electron-transfer flavoprotein]. Functionally, involved in the assimilation of dimethylsulphoniopropionate (DMSP), an important compound in the fixation of carbon in marine phytoplankton, by mediating the conversion of 3-(methylthio)propanoyl-CoA (MMPA-CoA) to 3-(methylthio)acryloyl-CoA (MTA-CoA). The sequence is that of 3-methylmercaptopropionyl-CoA dehydrogenase from Ruegeria pomeroyi (strain ATCC 700808 / DSM 15171 / DSS-3) (Silicibacter pomeroyi).